A 157-amino-acid chain; its full sequence is Crossover junction endodeoxyribonuclease RuvC (157 aa).

Catalysis depends on residues aspartate 7, glutamate 66, and aspartate 139. Residues aspartate 7, glutamate 66, and aspartate 139 each contribute to the Mg(2+) site.

This sequence belongs to the RuvC family. As to quaternary structure, homodimer which binds Holliday junction (HJ) DNA. The HJ becomes 2-fold symmetrical on binding to RuvC with unstacked arms; it has a different conformation from HJ DNA in complex with RuvA. In the full resolvosome a probable DNA-RuvA(4)-RuvB(12)-RuvC(2) complex forms which resolves the HJ. The cofactor is Mg(2+).

The protein localises to the cytoplasm. The enzyme catalyses Endonucleolytic cleavage at a junction such as a reciprocal single-stranded crossover between two homologous DNA duplexes (Holliday junction).. In terms of biological role, the RuvA-RuvB-RuvC complex processes Holliday junction (HJ) DNA during genetic recombination and DNA repair. Endonuclease that resolves HJ intermediates. Cleaves cruciform DNA by making single-stranded nicks across the HJ at symmetrical positions within the homologous arms, yielding a 5'-phosphate and a 3'-hydroxyl group; requires a central core of homology in the junction. The consensus cleavage sequence is 5'-(A/T)TT(C/G)-3'. Cleavage occurs on the 3'-side of the TT dinucleotide at the point of strand exchange. HJ branch migration catalyzed by RuvA-RuvB allows RuvC to scan DNA until it finds its consensus sequence, where it cleaves and resolves the cruciform DNA. The protein is Crossover junction endodeoxyribonuclease RuvC of Helicobacter pylori (strain P12).